Here is a 522-residue protein sequence, read N- to C-terminus: Maturase K (522 aa).

Belongs to the intron maturase 2 family. MatK subfamily.

Its subcellular location is the plastid. It localises to the chloroplast. Functionally, usually encoded in the trnK tRNA gene intron. Probably assists in splicing its own and other chloroplast group II introns. The chain is Maturase K from Iris domestica (Leopard lily).